We begin with the raw amino-acid sequence, 158 residues long: Transcription elongation factor GreA (158 aa).

Positions 47 to 68 (AEYDAAKEAQGLLELKIKKMEE) form a coiled coil.

The protein belongs to the GreA/GreB family.

Functionally, necessary for efficient RNA polymerase transcription elongation past template-encoded arresting sites. The arresting sites in DNA have the property of trapping a certain fraction of elongating RNA polymerases that pass through, resulting in locked ternary complexes. Cleavage of the nascent transcript by cleavage factors such as GreA or GreB allows the resumption of elongation from the new 3'terminus. GreA releases sequences of 2 to 3 nucleotides. The sequence is that of Transcription elongation factor GreA from Flavobacterium psychrophilum (strain ATCC 49511 / DSM 21280 / CIP 103535 / JIP02/86).